Consider the following 1266-residue polypeptide: TBC1 domain family member 9 (1266 aa).

2 GRAM domains span residues 146–213 (VKFH…EKNA) and 293–361 (ERYR…EKAD). Residues 415-456 (SYNSSDDEVYSRPSSLVSSSPQRSTSSDADGERQFNLNGNSV) form a disordered region. The span at 425-441 (SRPSSLVSSSPQRSTSS) shows a compositional bias: low complexity. The region spanning 515-702 (GIPESMRGEL…VVVDCFFYEG (188 aa)) is the Rab-GAP TBC domain. One can recognise an EF-hand domain in the interval 886 to 921 (HSDVLASRLFQLLDENGDSLINFREFVSGLSAACHG). Disordered stretches follow at residues 1075–1095 (AKEG…PGVL) and 1132–1164 (DIKL…SMSS).

May act as a GTPase-activating protein for Rab family protein(s). The chain is TBC1 domain family member 9 (TBC1D9) from Homo sapiens (Human).